A 140-amino-acid polypeptide reads, in one-letter code: MYDVTSILQILPHRYPFLLVDRIIEIEEGKKAKGIKNVTINEPFFQGHFPGNPVMPGVLIVEAMAQVGAVAILSKEEFKGKTPFFAGIDKVRFKKVVRPGDVLLIETELISLKGYIGKAKATAYVEGEVVCEGELLFAIK.

Residue His-48 is part of the active site.

Belongs to the thioester dehydratase family. FabZ subfamily.

The protein resides in the cytoplasm. The enzyme catalyses a (3R)-hydroxyacyl-[ACP] = a (2E)-enoyl-[ACP] + H2O. Involved in unsaturated fatty acids biosynthesis. Catalyzes the dehydration of short chain beta-hydroxyacyl-ACPs and long chain saturated and unsaturated beta-hydroxyacyl-ACPs. In Caldicellulosiruptor saccharolyticus (strain ATCC 43494 / DSM 8903 / Tp8T 6331), this protein is 3-hydroxyacyl-[acyl-carrier-protein] dehydratase FabZ.